The primary structure comprises 547 residues: DEAD-box ATP-dependent RNA helicase 31 (547 aa).

The span at 1–34 (MFDFGLSEDDSELGEVDEDDGPSGFEDDLFDDEG) shows a compositional bias: acidic residues. Residues 1-74 (MFDFGLSEDD…HTRESGGGDS (74 aa)) are disordered. Residues 53–70 (IKGEPIDQEGVVHTRESG) are compositionally biased toward basic and acidic residues. A Q motif motif is present at residues 79 to 107 (TRFDECSLSPLTLKGVKAAGYERMTAVQE). The 184-residue stretch at 110 to 293 (LPIILKGKDV…HIAMKRDLEF (184 aa)) folds into the Helicase ATP-binding domain. 123–130 (AKTGTGKT) serves as a coordination point for ATP. The short motif at 241 to 244 (DEAD) is the DEAD box element. One can recognise a Helicase C-terminal domain in the interval 327–478 (LLTDHISENV…TKRKVEKALA (152 aa)).

Belongs to the DEAD box helicase family.

It carries out the reaction ATP + H2O = ADP + phosphate + H(+). The protein is DEAD-box ATP-dependent RNA helicase 31 of Oryza sativa subsp. japonica (Rice).